A 207-amino-acid polypeptide reads, in one-letter code: Gap junction epsilon-1 protein (207 aa).

Over 1 to 22 (MSLNYIKNFYEGCLRPPTVIGQ) the chain is Cytoplasmic. The helical transmembrane segment at 23 to 43 (FHTLFFGSVRTFFLGVLGFAV) threads the bilayer. Residues 44–74 (YGNEALHFSCDPDKRELNLYCYNQFRPITPQ) lie on the Extracellular side of the membrane. Cystine bridges form between C53-C161 and C64-C147. The helical transmembrane segment at 75 to 95 (VFWALQLVTVLVPGAVFHLYA) threads the bilayer. Residues 96-111 (ACKNIDQEEILHRPMS) are Cytoplasmic-facing. A helical membrane pass occupies residues 112–132 (TVFYIISVLLRIILEVLAFWL). Over 133-175 (QSHLFGFLVDPIFMCDVTGLGKILNVSKCMVPEHFEKTIFLSA) the chain is Extracellular. The chain crosses the membrane as a helical span at residues 176–196 (MYTFTIITILLCIAEIFEILF). The Cytoplasmic portion of the chain corresponds to 197–207 (RRLGYLNQPMT).

This sequence belongs to the connexin family. Beta-type (group I) subfamily. In terms of assembly, a connexon is composed of a hexamer of connexins.

The protein resides in the cell membrane. Functionally, has significant hemichannel activity. However, has only low-efficiency gap junction activity and probably does not function as a gap junction channel in vivo. This is Gap junction epsilon-1 protein from Danio rerio (Zebrafish).